The following is a 485-amino-acid chain: Cysteine--tRNA ligase (485 aa).

Position 28 (Cys28) interacts with Zn(2+). A 'HIGH' region motif is present at residues 30–40 (MTVYDLCHVGH). Residues Cys209, His234, and Glu238 each contribute to the Zn(2+) site. The 'KMSKS' region signature appears at 266–270 (KMSKS). Residue Lys269 coordinates ATP.

Belongs to the class-I aminoacyl-tRNA synthetase family. In terms of assembly, monomer. Requires Zn(2+) as cofactor.

The protein resides in the cytoplasm. It catalyses the reaction tRNA(Cys) + L-cysteine + ATP = L-cysteinyl-tRNA(Cys) + AMP + diphosphate. The sequence is that of Cysteine--tRNA ligase from Nitrosococcus oceani (strain ATCC 19707 / BCRC 17464 / JCM 30415 / NCIMB 11848 / C-107).